The sequence spans 265 residues: Secreted RxLR effector protein 16 (265 aa).

Residues 1–19 (MRGAFYIAIALLIVRSRTA) form the signal peptide. Positions 46 to 61 (RYLRGGLALSATNEER) match the RxLR-dEER motif. N-linked (GlcNAc...) asparagine glycosylation is found at Asn170, Asn219, and Asn240.

It belongs to the RxLR effector family. In terms of processing, N-glycosylated. The putative N-glycosylation site at position 240 is essential for cell death-inducing activity.

It localises to the secreted. Its subcellular location is the host nucleus. Effector that acts as an elicitor that induces cell death and promotes ROS accumulation in Nicotian benthamiana. RxLR16-triggered cell death is dependent on SGT1, HSP90 and RAR1, but independent of the somatic embryogenesis receptor-like kinase SERK3/BAK1, indicating that it acts independently of the detection of cell surface pattern recognition receptors. Enhances the expressional levels of defense-associated genes involved in the salicylic acid-, jasmonate acid-, and ethylene-mediated signal transduction, resulting in disease resistance. However, as some other Plasmopara viticola RxLR effectors including RxLR1, RxLR10, RxLR30 and RxLR25, can suppress defense responses and disease resistance induced by RxLR16, it may not trigger host cell death or immune responses during physiological infection under natural conditions. This Plasmopara viticola (Downy mildew of grapevine) protein is Secreted RxLR effector protein 16.